The following is a 193-amino-acid chain: Zinc finger protein 740 (193 aa).

The interval 33–75 (SKQAENGERAGSPDVLRCSSQGHRKDSDKSRSRKDDDSLSEAS) is disordered. Residue K34 forms a Glycyl lysine isopeptide (Lys-Gly) (interchain with G-Cter in SUMO2) linkage. Position 44 is a phosphoserine (S44). A compositionally biased stretch (basic and acidic residues) spans 55-69 (HRKDSDKSRSRKDDD). 2 C2H2-type zinc fingers span residues 101–123 (FVCE…ILIH) and 129–151 (FECD…KRVH). The segment at 157 to 179 (YQCERCHQCFSRTDRLLRHKRMC) adopts a C2H2-type 3; atypical zinc-finger fold.

Belongs to the krueppel C2H2-type zinc-finger protein family.

Its subcellular location is the nucleus. Its function is as follows. May be involved in transcriptional regulation. The protein is Zinc finger protein 740 (ZNF740) of Homo sapiens (Human).